Here is a 615-residue protein sequence, read N- to C-terminus: Deoxyribodipyrimidine photo-lyase (615 aa).

Residues 1–53 (MAPSKRKASAPPQTSHVNGNPSADKKRKTTTDAPPTNPNTSSDPLRAPHPFYK) are disordered. A compositionally biased stretch (polar residues) spans 11-21 (PPQTSHVNGNP). The span at 31 to 40 (TDAPPTNPNT) shows a compositional bias: low complexity. In terms of domain architecture, Photolyase/cryptochrome alpha/beta spans 108–249 (QAVVHWFKMD…AADVVHDTCV (142 aa)). Tyrosine 352 provides a ligand contact to FAD. Arginine 356 provides a ligand contact to DNA. 364 to 368 (TSNLS) lines the FAD pocket. Interaction with DNA stretches follow at residues 407–414 (EVAWRDFY) and 474–475 (NR). 505-507 (DGD) is an FAD binding site. Glutamine 537 contacts DNA.

It belongs to the DNA photolyase class-1 family. In terms of assembly, monomer. FAD is required as a cofactor. Requires (6R)-5,10-methylene-5,6,7,8-tetrahydrofolate as cofactor.

It catalyses the reaction cyclobutadipyrimidine (in DNA) = 2 pyrimidine residues (in DNA).. Involved in repair of UV radiation-induced DNA damage. Catalyzes the light-dependent monomerization (300-600 nm) of cyclobutyl pyrimidine dimers (in cis-syn configuration), which are formed between adjacent bases on the same DNA strand upon exposure to ultraviolet radiation. The chain is Deoxyribodipyrimidine photo-lyase (phr) from Neurospora crassa (strain ATCC 24698 / 74-OR23-1A / CBS 708.71 / DSM 1257 / FGSC 987).